Here is a 212-residue protein sequence, read N- to C-terminus: NADH dehydrogenase [ubiquinone] iron-sulfur protein 8, mitochondrial (212 aa).

A mitochondrion-targeting transit peptide spans 1-36 (MRCLTMPMLLRALAQAQAARAGHASVRGLHSSAVAA). 4Fe-4S ferredoxin-type domains follow at residues 104–133 (RRYPSGEERCIACKLCEAVCPAQAITIEAE) and 143–172 (TRYDIDMTKCIYCGFCQEACPVDAIVEGPN). [4Fe-4S] cluster is bound by residues C113, C116, C119, C123, C152, C155, C158, and C162.

Belongs to the complex I 23 kDa subunit family. Core subunit of respiratory chain NADH dehydrogenase (Complex I) which is composed of 45 different subunits. This is a component of the iron-sulfur (IP) fragment of the enzyme. Interacts with RAB5IF. Requires [4Fe-4S] cluster as cofactor.

The protein localises to the mitochondrion inner membrane. The enzyme catalyses a ubiquinone + NADH + 5 H(+)(in) = a ubiquinol + NAD(+) + 4 H(+)(out). Functionally, core subunit of the mitochondrial membrane respiratory chain NADH dehydrogenase (Complex I) which catalyzes electron transfer from NADH through the respiratory chain, using ubiquinone as an electron acceptor. Essential for the catalytic activity and assembly of complex I. The protein is NADH dehydrogenase [ubiquinone] iron-sulfur protein 8, mitochondrial (NDUFS8) of Bos taurus (Bovine).